A 1648-amino-acid polypeptide reads, in one-letter code: Pleiotropic ABC efflux transporter of multiple drugs YBT1 (1648 aa).

Residues 28–48 form a helical membrane-spanning segment; the sequence is NYVPTTLVTISILILLHNFFI. An N-linked (GlcNAc...) asparagine glycan is attached at asparagine 72. 4 helical membrane-spanning segments follow: residues 140 to 160, 175 to 195, 207 to 227, and 250 to 270; these read VVIE…LSIE, PHVL…LNLN, NIWL…ILPF, and LNLV…LPVL. Asparagine 306 carries N-linked (GlcNAc...) asparagine glycosylation. A run of 2 helical transmembrane segments spans residues 352 to 372 and 392 to 412; these read FLNL…SIFV and MNLA…VAIC. In terms of domain architecture, ABC transmembrane type-1 1 spans 361–674; the sequence is CFTTISAFSI…ISDMLSYLIQ (314 aa). The N-linked (GlcNAc...) asparagine glycan is linked to asparagine 471. 2 helical membrane passes run 501–521 and 523–543; these read ISEL…LTVS and ILLY…TIII. N-linked (GlcNAc...) asparagine glycosylation is present at asparagine 573. 2 helical membrane passes run 612–632 and 643–662; these read VWCV…GCTF and LTTP…RDPL. In terms of domain architecture, ABC transporter 1 spans 706-947; sequence LAFENVTLRW…GLLGEDENMK (242 aa). An N-linked (GlcNAc...) asparagine glycan is attached at asparagine 710. 741–748 contributes to the ATP binding site; the sequence is GATGSGKT. 2 N-linked (GlcNAc...) asparagine glycosylation sites follow: asparagine 784 and asparagine 798. Residues 1012-1032 form a helical membrane-spanning segment; it reads MYGGWYTIVALASVFTAILCL. In terms of domain architecture, ABC transmembrane type-1 2 spans 1032-1333; the sequence is LQITQAWWIR…LVRQYSELEM (302 aa). Asparagine 1042 carries an N-linked (GlcNAc...) asparagine glycan. 3 helical membrane-spanning segments follow: residues 1089–1109, 1168–1188, and 1191–1211; these read IAKF…IGSI, IQSV…ISYI, and AFFP…FFYL. Asparagine 1255 is a glycosylation site (N-linked (GlcNAc...) asparagine). Transmembrane regions (helical) follow at residues 1282 to 1302 and 1305 to 1325; these read LIGA…INNI and GLAG…LWLV. One can recognise an ABC transporter 2 domain in the interval 1372–1622; the sequence is VEVNNLSLKY…KKSIFYNMCE (251 aa). N-linked (GlcNAc...) asparagine glycosylation occurs at asparagine 1376. 1406 to 1413 is an ATP binding site; that stretch reads GRTGAGKS. 3 N-linked (GlcNAc...) asparagine glycosylation sites follow: asparagine 1503, asparagine 1524, and asparagine 1573.

This sequence belongs to the ABC transporter superfamily. ABCC family. Conjugate transporter (TC 3.A.1.208) subfamily.

Its subcellular location is the membrane. In terms of biological role, pleiotropic ABC efflux transporter that might be involved in the resistance to azoles such as fluconazole. The protein is Pleiotropic ABC efflux transporter of multiple drugs YBT1 of Candida glabrata (strain ATCC 2001 / BCRC 20586 / JCM 3761 / NBRC 0622 / NRRL Y-65 / CBS 138) (Yeast).